We begin with the raw amino-acid sequence, 487 residues long: Complement C1r subcomponent-like protein (487 aa).

The signal sequence occupies residues 1–35 (MPGPRVWGKYLWRSPHSKGCPGAMWWLLLWGVLQA). Positions 39 to 163 (RGSVLLAQEL…KGFLALYQTV (125 aa)) constitute a CUB domain. The cysteines at positions 94 and 112 are disulfide-linked. N-linked (GlcNAc...) asparagine glycans are attached at residues N147 and N166. Residues 165–230 (VNYSQPISEA…DGEEVLQCMP (66 aa)) form the Sushi domain. Cysteines 195 and 228 form a disulfide. Residue N242 is glycosylated (N-linked (GlcNAc...) (complex) asparagine). Residues 245-484 (TLGSSRAKLG…YVDWIKGVMN (240 aa)) enclose the Peptidase S1 domain. H283 (charge relay system) is an active-site residue. N296 is a glycosylation site (N-linked (GlcNAc...) asparagine). Catalysis depends on D339, which acts as the Charge relay system. The N-linked (GlcNAc...) asparagine glycan is linked to N363. Cystine bridges form between C402–C421 and C432–C462. The active-site Charge relay system is S436.

The protein belongs to the peptidase S1 family. As to expression, highly expressed in placenta, liver, kidney, pancreas, moderately in lung, spleen, prostate, ovary, colon, and PBL, and weakly in heart, skeletal muscle, thymus, testis, and small intestine. Expressed in PC-3 (prostate adenocarcinoma) and SK-OV-3 (ovary adenocarcinoma) cells, but not in LoVo and HT-29 (colon adenocarcinoma), SMMC7721 (hepatocellular carcinoma), CaoV-3 (ovary adenocarcinoma), HeLa (cervix epithelioid carcinoma), MCF-7 (breast adenocarcinoma), U-251MG (glioma) or A-549 (lung carcinoma) cells. Widely expressed in myeloid leukemia cell lines, including K-562 (chronic myelogenous leukemia), THP-1 (myelomonocytic leukemia), HL-60 and NB4 (promyelocytic leukemia), and KG-1 (acute myelogenous leukemia) cells. Expressed mainly in the liver and in serum (at protein level).

It localises to the secreted. In terms of biological role, mediates the proteolytic cleavage of HP/haptoglobin in the endoplasmic reticulum. This Homo sapiens (Human) protein is Complement C1r subcomponent-like protein (C1RL).